The primary structure comprises 157 residues: Transcription elongation factor GreA (157 aa).

The stretch at 1–75 (MSKEIILTQE…VETLINRAKV (75 aa)) forms a coiled coil.

The protein belongs to the GreA/GreB family.

Necessary for efficient RNA polymerase transcription elongation past template-encoded arresting sites. The arresting sites in DNA have the property of trapping a certain fraction of elongating RNA polymerases that pass through, resulting in locked ternary complexes. Cleavage of the nascent transcript by cleavage factors such as GreA or GreB allows the resumption of elongation from the new 3'terminus. GreA releases sequences of 2 to 3 nucleotides. This chain is Transcription elongation factor GreA, found in Mycoplasma capricolum subsp. capricolum (strain California kid / ATCC 27343 / NCTC 10154).